An 82-amino-acid polypeptide reads, in one-letter code: Small ribosomal subunit protein bS16 (82 aa).

Belongs to the bacterial ribosomal protein bS16 family.

The chain is Small ribosomal subunit protein bS16 from Shewanella sp. (strain ANA-3).